The primary structure comprises 203 residues: Outer-membrane lipoprotein LolB (203 aa).

The N-terminal stretch at 1–18 is a signal peptide; the sequence is MTLRSFLILLLSSIVLAG. The N-palmitoyl cysteine moiety is linked to residue C19. C19 is lipidated: S-diacylglycerol cysteine.

It belongs to the LolB family. As to quaternary structure, monomer.

The protein resides in the cell outer membrane. Its function is as follows. Plays a critical role in the incorporation of lipoproteins in the outer membrane after they are released by the LolA protein. This Vibrio campbellii (strain ATCC BAA-1116) protein is Outer-membrane lipoprotein LolB.